Here is a 444-residue protein sequence, read N- to C-terminus: Viral protein kinase (444 aa).

A disordered region spans residues 1 to 25; the sequence is MRWKRMERRPPLTPLRRSRTQSSGG. Residues 90–98 and Lys108 each bind ATP; that span reads LGRGAFGII. The Proton acceptor role is filled by Asp201.

Interacts with protein K-bZIP/K8. Interacts with host beta-catenin/CTNNB1. In terms of processing, AUtophosphorylated.

It is found in the host nucleus. The catalysed reaction is L-seryl-[protein] + ATP = O-phospho-L-seryl-[protein] + ADP + H(+). It carries out the reaction L-threonyl-[protein] + ATP = O-phospho-L-threonyl-[protein] + ADP + H(+). In terms of biological role, serine/threonine protein kinase that plays a role in viral gene expression, viral DNA replication and encapsidation, and nuclear egress of virions. Regulates host transcriptional activity through interactions with RNA helicase and c-Jun N-terminal kinase (JNK) and viral transcriptional activity through interactions with the viral protein K-bZIP/K8. Induces host chromosome condensation and phosphorylation of histone H3. Phosphorylates the DNA polymerase processivity factor hence modulating its processivity function. Inhibits the host Wnt signaling pathway via direct interactions with beta-catenin/CTNNB1 while the kinase activity of vPK is not required for this inhibitory activity. Also phosphorylates host SAMHD1 and thereby counteracts its antiviral effect by reducing its dNTP hydrolase activity. In Human herpesvirus 8 type P (isolate GK18) (HHV-8), this protein is Viral protein kinase (vPK).